Here is an 89-residue protein sequence, read N- to C-terminus: Small ribosomal subunit protein uS17 (89 aa).

The protein belongs to the universal ribosomal protein uS17 family. In terms of assembly, part of the 30S ribosomal subunit.

One of the primary rRNA binding proteins, it binds specifically to the 5'-end of 16S ribosomal RNA. This Xanthomonas campestris pv. campestris (strain B100) protein is Small ribosomal subunit protein uS17.